The primary structure comprises 292 residues: MVGIQRLIKHDDGTVQEISITADGWVKESYYKKKTPVKPDSNPGVKYEELEPVHRVFSKKPTCQQLFFYLLFWWTYLTIVVLLTVPLNPYQIHRSYRLMMGPASYPINCNRATPDRYSRSCFSSFFCTWDIFMPEIKVQNETFYPNFTKSDGSPADYSSALLWATSFITNPNCTNFTVLYSDSSNSSQRNDSDYEVATFVMLEGLFMLRHKCHPETVYLGRRRCGAHRWRFVNVYDTSYLNHSTCSFDWASLSNASYTPQLGPNCSMANLTEEELKSGFYLHLQQVEIKPSQ.

The chain crosses the membrane as a helical span at residues 66–86 (LFFYLLFWWTYLTIVVLLTVP).

It is found in the host membrane. This is an uncharacterized protein from Alcelaphine herpesvirus 1 (strain C500) (AlHV-1).